Reading from the N-terminus, the 734-residue chain is Photosystem I P700 chlorophyll a apoprotein A2 (734 aa).

8 consecutive transmembrane segments (helical) span residues 46 to 69 (IFAS…FHVA), 135 to 158 (LYIG…LHLQ), 175 to 199 (LNHH…HVAI), 273 to 291 (MAHH…GHMY), 330 to 353 (LHFQ…QHMY), 369 to 395 (AALY…IFFI), 417 to 439 (AIIS…LYVH), and 517 to 535 (FLVH…LILV). [4Fe-4S] cluster contacts are provided by Cys-559 and Cys-568. The next 2 membrane-spanning stretches (helical) occupy residues 575–596 (AFYL…YWHW) and 643–665 (LSVW…MFLI). Chlorophyll a-binding residues include His-654, Met-662, and Tyr-670. Position 671 (Trp-671) interacts with phylloquinone. Residues 707 to 727 (LVGLAHFSVGYIFTYAAFLIA) form a helical membrane-spanning segment.

This sequence belongs to the PsaA/PsaB family. The PsaA/B heterodimer binds the P700 chlorophyll special pair and subsequent electron acceptors. PSI consists of a core antenna complex that captures photons, and an electron transfer chain that converts photonic excitation into a charge separation. The eukaryotic PSI reaction center is composed of at least 11 subunits. It depends on P700 is a chlorophyll a/chlorophyll a' dimer, A0 is one or more chlorophyll a, A1 is one or both phylloquinones and FX is a shared 4Fe-4S iron-sulfur center. as a cofactor.

The protein localises to the plastid. It localises to the chloroplast thylakoid membrane. The catalysed reaction is reduced [plastocyanin] + hnu + oxidized [2Fe-2S]-[ferredoxin] = oxidized [plastocyanin] + reduced [2Fe-2S]-[ferredoxin]. In terms of biological role, psaA and PsaB bind P700, the primary electron donor of photosystem I (PSI), as well as the electron acceptors A0, A1 and FX. PSI is a plastocyanin-ferredoxin oxidoreductase, converting photonic excitation into a charge separation, which transfers an electron from the donor P700 chlorophyll pair to the spectroscopically characterized acceptors A0, A1, FX, FA and FB in turn. Oxidized P700 is reduced on the lumenal side of the thylakoid membrane by plastocyanin. This Populus alba (White poplar) protein is Photosystem I P700 chlorophyll a apoprotein A2.